Here is a 121-residue protein sequence, read N- to C-terminus: NADH-quinone oxidoreductase subunit 7 (121 aa).

3 helical membrane-spanning segments follow: residues 11–31, 65–85, and 93–113; these read ILVFLGMASALAIVLILAAAV, LVSILFIIFDLEVAFLFPWAV, and VAFWGLMVFLAVLTVGFAYEW.

It belongs to the complex I subunit 3 family. NDH-1 is composed of at least 14 different subunits, Nqo1 to Nqo14. The complex has a L-shaped structure, with the hydrophobic arm (subunits Nqo7, Nqo8, Nqo10 to Nqo14) embedded in the inner membrane and the hydrophilic peripheral arm (subunits Nqo1 to Nqo6, Nqo9) protruding into the bacterial cytoplasm. The hydrophilic domain contains all the redox centers.

It localises to the cell inner membrane. The catalysed reaction is a quinone + NADH + 5 H(+)(in) = a quinol + NAD(+) + 4 H(+)(out). NDH-1 shuttles electrons from NADH, via FMN and iron-sulfur (Fe-S) centers, to quinones in the respiratory chain. The immediate electron acceptor for the enzyme in this species is believed to be ubiquinone. Couples the redox reaction to proton translocation (for every two electrons transferred, four hydrogen ions are translocated across the cytoplasmic membrane), and thus conserves the redox energy in a proton gradient. The sequence is that of NADH-quinone oxidoreductase subunit 7 (nqo7) from Paracoccus denitrificans.